We begin with the raw amino-acid sequence, 1294 residues long: ATPase PglY (1294 aa).

The tract at residues 1205 to 1263 (TQAAATPPPAPAASQPTAGDLSLDTPTSDPRIPYTSQETPTSSGGAGTARTSGGRRTTA) is disordered. Residues 1228 to 1244 (DTPTSDPRIPYTSQETP) show a composition bias toward polar residues. Positions 1252–1263 (TARTSGGRRTTA) are enriched in low complexity.

In terms of biological role, BREX systems (bacteriophage exclusion) provide immunity against bacteriophage. Part of a type 2 BREX system. Previously called the phage growth limitation (Pgl) system, it confers protection against bacteriophage phiC31. The bacteria allows one cycle of phage infection, but subsequent cycles are impaired, protecting the original bacterial colony. The system undergoes high rates (10(-3) to 10(-4)) of phase reversion, i.e. loss and regain of phiC31 resistance. When the pglW-pglX-pglY-pglZ genes are transformed into a susceptible S.lividans (strain 1326) they confer resistance to infection by phage phiC31 and phiBT1; all 4 genes are necessary. Functionally, hydrolyzes ATP but not AMP, ADP, GMP, GDP or GTP; activity is inhibited by the non-hydrolyzable ATP analog 5-adenylyl beta,gamma-imidodiphosphate. In Streptomyces coelicolor (strain ATCC BAA-471 / A3(2) / M145), this protein is ATPase PglY.